The chain runs to 230 residues: Cytidylate kinase (230 aa).

An ATP-binding site is contributed by 12–20; it reads GPSGTGKST.

It belongs to the cytidylate kinase family. Type 1 subfamily.

Its subcellular location is the cytoplasm. It carries out the reaction CMP + ATP = CDP + ADP. The enzyme catalyses dCMP + ATP = dCDP + ADP. This chain is Cytidylate kinase, found in Corynebacterium efficiens (strain DSM 44549 / YS-314 / AJ 12310 / JCM 11189 / NBRC 100395).